The primary structure comprises 116 residues: Large ribosomal subunit protein bL17 (116 aa).

This sequence belongs to the bacterial ribosomal protein bL17 family. In terms of assembly, part of the 50S ribosomal subunit. Contacts protein L32.

The protein is Large ribosomal subunit protein bL17 of Trichodesmium erythraeum (strain IMS101).